We begin with the raw amino-acid sequence, 316 residues long: MFKLLFHIAAFAGHVLSTPIFIVQDACGIDEEACKNPPPRPFSAQVQYLKVNDAKFKKLPHQTIGYRQYDGTFLCTLPITEHSGLLFSTGYIGADIQWKSSLPISETDPNGLGWATFQDTSFYNYVLLSLGAYTLSLKNWQWSIILSGLVDPKNIEMGYGLYQGVLSGKYQATEKLSAIFGVINETGLHQEKAWPLVGVSYKATDQLTLNCIYPVNFSIDYRSTSVCNLGLAYRLTRFRKKLYKNHLISSRGIFEYQGREIEANVKLTPWPGSFIKGFYGWSIGNDISIADDHNNNKTSHTFKTSAFFGGSAVMNF.

This sequence belongs to the chlamydial CPn_0441/CT_007/TC_0275 family.

This is an uncharacterized protein from Chlamydia pneumoniae (Chlamydophila pneumoniae).